Reading from the N-terminus, the 362-residue chain is S-adenosylmethionine decarboxylase proenzyme (362 aa).

Active-site residues include Glu-11 and Glu-14. Residue Ser-71 is the Schiff-base intermediate with substrate; via pyruvic acid of the active site. Pyruvic acid (Ser); by autocatalysis is present on Ser-71. Cys-85 functions as the Proton donor; for catalytic activity in the catalytic mechanism. Catalysis depends on proton acceptor; for processing activity residues Ser-234 and His-247.

It belongs to the eukaryotic AdoMetDC family. Pyruvate serves as cofactor. Post-translationally, is synthesized initially as an inactive proenzyme. Formation of the active enzyme involves a self-maturation process in which the active site pyruvoyl group is generated from an internal serine residue via an autocatalytic post-translational modification. Two non-identical subunits are generated from the proenzyme in this reaction, and the pyruvate is formed at the N-terminus of the alpha chain, which is derived from the carboxyl end of the proenzyme. The post-translation cleavage follows an unusual pathway, termed non-hydrolytic serinolysis, in which the side chain hydroxyl group of the serine supplies its oxygen atom to form the C-terminus of the beta chain, while the remainder of the serine residue undergoes an oxidative deamination to produce ammonia and the pyruvoyl group blocking the N-terminus of the alpha chain.

It catalyses the reaction S-adenosyl-L-methionine + H(+) = S-adenosyl 3-(methylsulfanyl)propylamine + CO2. It functions in the pathway amine and polyamine biosynthesis; S-adenosylmethioninamine biosynthesis; S-adenosylmethioninamine from S-adenosyl-L-methionine: step 1/1. In Ipomoea batatas (Sweet potato), this protein is S-adenosylmethionine decarboxylase proenzyme (SAMDC).